Reading from the N-terminus, the 457-residue chain is tRNA-2-methylthio-N(6)-dimethylallyladenosine synthase (457 aa).

The region spanning 19-134 (RKLFIETYGC…LPNLVGAVEH (116 aa)) is the MTTase N-terminal domain. Residues C28, C64, C98, C172, C176, and C179 each contribute to the [4Fe-4S] cluster site. The Radical SAM core domain maps to 158–390 (PGVHISGFVS…IDLQNKLSEE (233 aa)). Residues 393–456 (LRDIGKTFEV…SATLFGEPVE (64 aa)) form the TRAM domain.

The protein belongs to the methylthiotransferase family. MiaB subfamily. As to quaternary structure, monomer. The cofactor is [4Fe-4S] cluster.

Its subcellular location is the cytoplasm. The enzyme catalyses N(6)-dimethylallyladenosine(37) in tRNA + (sulfur carrier)-SH + AH2 + 2 S-adenosyl-L-methionine = 2-methylsulfanyl-N(6)-dimethylallyladenosine(37) in tRNA + (sulfur carrier)-H + 5'-deoxyadenosine + L-methionine + A + S-adenosyl-L-homocysteine + 2 H(+). Its function is as follows. Catalyzes the methylthiolation of N6-(dimethylallyl)adenosine (i(6)A), leading to the formation of 2-methylthio-N6-(dimethylallyl)adenosine (ms(2)i(6)A) at position 37 in tRNAs that read codons beginning with uridine. The sequence is that of tRNA-2-methylthio-N(6)-dimethylallyladenosine synthase from Parabacteroides distasonis (strain ATCC 8503 / DSM 20701 / CIP 104284 / JCM 5825 / NCTC 11152).